We begin with the raw amino-acid sequence, 203 residues long: A-type ATP synthase subunit E (203 aa).

This sequence belongs to the V-ATPase E subunit family. Has multiple subunits with at least A(3), B(3), C, D, E, F, H, I and proteolipid K(x).

It is found in the cell membrane. Component of the A-type ATP synthase that produces ATP from ADP in the presence of a proton gradient across the membrane. This Methanococcus maripaludis (strain DSM 14266 / JCM 13030 / NBRC 101832 / S2 / LL) protein is A-type ATP synthase subunit E.